The primary structure comprises 347 residues: N-acetyl-gamma-glutamyl-phosphate reductase (347 aa).

Cys153 is a catalytic residue.

Belongs to the NAGSA dehydrogenase family. Type 1 subfamily.

Its subcellular location is the cytoplasm. The catalysed reaction is N-acetyl-L-glutamate 5-semialdehyde + phosphate + NADP(+) = N-acetyl-L-glutamyl 5-phosphate + NADPH + H(+). The protein operates within amino-acid biosynthesis; L-arginine biosynthesis; N(2)-acetyl-L-ornithine from L-glutamate: step 3/4. Catalyzes the NADPH-dependent reduction of N-acetyl-5-glutamyl phosphate to yield N-acetyl-L-glutamate 5-semialdehyde. The chain is N-acetyl-gamma-glutamyl-phosphate reductase from Mycobacterium leprae (strain Br4923).